Here is a 149-residue protein sequence, read N- to C-terminus: Transcriptional repressor NrdR (149 aa).

Residues 3–34 (CPFCFAVDTKVIDSRLVGEGSSVRRRRQCLVC) fold into a zinc finger. The 91-residue stretch at 49–139 (PRVVKSNDVR…VYRSFEDIKE (91 aa)) folds into the ATP-cone domain.

This sequence belongs to the NrdR family. Requires Zn(2+) as cofactor.

Its function is as follows. Negatively regulates transcription of bacterial ribonucleotide reductase nrd genes and operons by binding to NrdR-boxes. This chain is Transcriptional repressor NrdR, found in Shigella flexneri.